The chain runs to 432 residues: Trigger factor (432 aa).

The region spanning 161 to 246 (EDRVTIDFTG…LKKVEERELP (86 aa)) is the PPIase FKBP-type domain.

The protein belongs to the FKBP-type PPIase family. Tig subfamily.

It is found in the cytoplasm. The enzyme catalyses [protein]-peptidylproline (omega=180) = [protein]-peptidylproline (omega=0). Its function is as follows. Involved in protein export. Acts as a chaperone by maintaining the newly synthesized protein in an open conformation. Functions as a peptidyl-prolyl cis-trans isomerase. The sequence is that of Trigger factor from Cronobacter sakazakii (strain ATCC BAA-894) (Enterobacter sakazakii).